The chain runs to 209 residues: Na(+)-translocating NADH-quinone reductase subunit D (209 aa).

The next 5 helical transmembrane spans lie at 42–62 (LVMT…ISLI), 70–90 (VRII…DQIL), 103–123 (VFVG…AYAM), 131–151 (FMDG…VGFV), and 178–198 (NGLF…IWGL).

It belongs to the NqrDE/RnfAE family. As to quaternary structure, composed of six subunits; NqrA, NqrB, NqrC, NqrD, NqrE and NqrF.

The protein localises to the cell inner membrane. The catalysed reaction is a ubiquinone + n Na(+)(in) + NADH + H(+) = a ubiquinol + n Na(+)(out) + NAD(+). In terms of biological role, NQR complex catalyzes the reduction of ubiquinone-1 to ubiquinol by two successive reactions, coupled with the transport of Na(+) ions from the cytoplasm to the periplasm. NqrA to NqrE are probably involved in the second step, the conversion of ubisemiquinone to ubiquinol. The sequence is that of Na(+)-translocating NADH-quinone reductase subunit D from Yersinia enterocolitica serotype O:8 / biotype 1B (strain NCTC 13174 / 8081).